We begin with the raw amino-acid sequence, 92 residues long: Transcriptional regulator WhiB1 (92 aa).

Residues 12-74 enclose the 4Fe-4S Wbl-type domain; sequence ACRDKDPELF…GGLSEDERRA (63 aa). [4Fe-4S] cluster is bound by residues C13, C41, C44, and C50.

It belongs to the WhiB family. The cofactor is [4Fe-4S] cluster. The Fe-S cluster can be nitrosylated by nitric oxide (NO). In terms of processing, upon Fe-S cluster removal intramolecular disulfide bonds are formed.

Its subcellular location is the cytoplasm. In terms of biological role, acts as a transcriptional regulator. Probably redox-responsive. The apo- but not holo-form probably binds DNA. The chain is Transcriptional regulator WhiB1 (whiB1) from Bifidobacterium longum (strain NCC 2705).